Here is a 551-residue protein sequence, read N- to C-terminus: DNA double-strand break repair helicase HerA (551 aa).

Residues Arg152, 161 to 166, and 507 to 508 contribute to the ATP site; these read GAGKSN and RI.

Belongs to the HerA family. Homohexamer. Interacts with NurA.

It carries out the reaction Couples ATP hydrolysis with the unwinding of duplex DNA at the replication fork by translocating in the 5'-3' direction. This creates two antiparallel DNA single strands (ssDNA). The leading ssDNA polymer is the template for DNA polymerase III holoenzyme which synthesizes a continuous strand.. The catalysed reaction is ATP + H2O = ADP + phosphate + H(+). The enzyme catalyses Couples ATP hydrolysis with the unwinding of duplex DNA by translocating in the 3'-5' direction.. Its activity is regulated as follows. Helicase activity is stimulated in the presence of NurA. Functionally, involved in DNA double-strand break (DSB) repair. Probably acts with NurA to stimulate resection of the 5' strand and produce the long 3' single-strand that is required for RadA loading. Has DNA-dependent ATPase activity and DNA helicase activity. This is DNA double-strand break repair helicase HerA from Pyrococcus furiosus (strain ATCC 43587 / DSM 3638 / JCM 8422 / Vc1).